The chain runs to 496 residues: MATEKTHQFHPSLHFVLFPFMAQGHMIPMIDIARLLAQRGVTITIVTTPHNAARFKNVLNRAIESGLAINILHVKFPYQEFGLPEGKENIDSLDSTELMVPFFKAVNLLEDPVMKLMEEMKPRPSCLISDWCLPYTSIIAKNFNIPKIVFHGMGCFNLLCMHVLRRNLEILENVKSDEEYFLVPSFPDRVEFTKLQLPVKANASGDWKEIMDEMVKAEYTSYGVIVNTFQELEPPYVKDYKEAMDGKVWSIGPVSLCNKAGADKAERGSKAAIDQDECLQWLDSKEEGSVLYVCLGSICNLPLSQLKELGLGLEESRRSFIWVIRGSEKYKELFEWMLESGFEERIKERGLLIKGWAPQVLILSHPSVGGFLTHCGWNSTLEGITSGIPLITWPLFGDQFCNQKLVVQVLKAGVSAGVEEVMKWGEEDKIGVLVDKEGVKKAVEELMGDSDDAKERRRRVKELGELAHKAVEKGGSSHSNITLLLQDIMQLAQFKN.

UDP-alpha-D-glucose-binding positions include Ser297, 357-359 (APQ), 374-382 (HCGWNSTLE), and 396-399 (FGDQ).

It belongs to the UDP-glycosyltransferase family.

This chain is UDP-glycosyltransferase 73C3 (UGT73C3), found in Arabidopsis thaliana (Mouse-ear cress).